A 639-amino-acid chain; its full sequence is Poly(A)-specific ribonuclease PARN (639 aa).

The a divalent metal cation site is built by aspartate 28 and glutamate 30. 2 positions are modified to phosphoserine: serine 163 and serine 167. Positions 178–245 constitute an R3H domain; that stretch reads KKFIDQVVEK…ERYIVISKVD (68 aa). At lysine 220 the chain carries N6-acetyllysine. A divalent metal cation is bound by residues aspartate 292 and aspartate 382. Lysine 499 is modified (N6-acetyllysine). Serine 530 carries the phosphoserine modification. Serine 557 carries the post-translational modification Phosphoserine; by MAPKAPK2. The disordered stretch occupies residues 560–639; it reads APSTVGKRNL…ATLFEVPDTW (80 aa). Serine 583 and serine 587 each carry phosphoserine. Basic residues predominate over residues 606–615; sequence KKAKKLKRMK. Phosphoserine is present on residues serine 619, serine 623, and serine 628. Threonine 631 is subject to Phosphothreonine.

Belongs to the CAF1 family. As to quaternary structure, homodimer. Found in a mRNA decay complex with RENT1, RENT2 and RENT3B. Interacts with KHSRP. Interacts with CELF1/CUGBP1. Interacts with ZC3HAV1 in an RNA-independent manner. Interacts with DHX36. It depends on Mg(2+) as a cofactor. Phosphorylation by MAPKAPK2, preventing GADD45A mRNA degradation after genotoxic stress. Ubiquitous.

The protein resides in the nucleus. Its subcellular location is the cytoplasm. It localises to the nucleolus. It catalyses the reaction Exonucleolytic cleavage of poly(A) to 5'-AMP.. 3'-exoribonuclease that has a preference for poly(A) tails of mRNAs, thereby efficiently degrading poly(A) tails. Exonucleolytic degradation of the poly(A) tail is often the first step in the decay of eukaryotic mRNAs and is also used to silence certain maternal mRNAs translationally during oocyte maturation and early embryonic development. Interacts with both the 3'-end poly(A) tail and the 5'-end cap structure during degradation, the interaction with the cap structure being required for an efficient degradation of poly(A) tails. Involved in nonsense-mediated mRNA decay, a critical process of selective degradation of mRNAs that contain premature stop codons. Also involved in degradation of inherently unstable mRNAs that contain AU-rich elements (AREs) in their 3'-UTR, possibly via its interaction with KHSRP. Probably mediates the removal of poly(A) tails of AREs mRNAs, which constitutes the first step of destabilization. Also able to recognize and trim poly(A) tails of microRNAs such as MIR21 and H/ACA box snoRNAs (small nucleolar RNAs) leading to microRNAs degradation or snoRNA increased stability. This is Poly(A)-specific ribonuclease PARN (PARN) from Homo sapiens (Human).